A 410-amino-acid polypeptide reads, in one-letter code: Cysteine desulfurase IscS (410 aa).

Pyridoxal 5'-phosphate contacts are provided by residues 80–81, asparagine 160, glutamine 188, and 208–210; these read AT and SGH. At lysine 211 the chain carries N6-(pyridoxal phosphate)lysine. Position 248 (threonine 248) interacts with pyridoxal 5'-phosphate. Cysteine 334 serves as the catalytic Cysteine persulfide intermediate. A [2Fe-2S] cluster-binding site is contributed by cysteine 334.

It belongs to the class-V pyridoxal-phosphate-dependent aminotransferase family. NifS/IscS subfamily. As to quaternary structure, homodimer. Forms a heterotetramer with IscU, interacts with other sulfur acceptors. Requires pyridoxal 5'-phosphate as cofactor.

It is found in the cytoplasm. The enzyme catalyses (sulfur carrier)-H + L-cysteine = (sulfur carrier)-SH + L-alanine. It functions in the pathway cofactor biosynthesis; iron-sulfur cluster biosynthesis. Master enzyme that delivers sulfur to a number of partners involved in Fe-S cluster assembly, tRNA modification or cofactor biosynthesis. Catalyzes the removal of elemental sulfur atoms from cysteine to produce alanine. Functions as a sulfur delivery protein for Fe-S cluster synthesis onto IscU, an Fe-S scaffold assembly protein, as well as other S acceptor proteins. This Rickettsia felis (strain ATCC VR-1525 / URRWXCal2) (Rickettsia azadi) protein is Cysteine desulfurase IscS.